Here is a 255-residue protein sequence, read N- to C-terminus: MNTKVPIYSINGEKRGEIDLPEIFNYSVREDLIRKAFRAISLSLRQPYGSSPLAGLRRVGHTTKPGLGISRMPRIAGGSRVVGIASAVGGKSAHSPRSTKKLYVGINEKERKMAKFSAIAMTASADAVRKRGHRFSESLPLPVVVEDAVSGIKKTKDAVNLLKSIGLYEDILRSKEGKHIRAGRGKMRNRRYKVPKSLLIVGTDSVSLKVFKSLPGVDVASMDSLSIRKLAPGGVGGRLTVYTESAIEKLREANA.

It belongs to the universal ribosomal protein uL4 family. Part of the 50S ribosomal subunit.

In terms of biological role, one of the primary rRNA binding proteins, this protein initially binds near the 5'-end of the 23S rRNA. It is important during the early stages of 50S assembly. It makes multiple contacts with different domains of the 23S rRNA in the assembled 50S subunit and ribosome. Forms part of the polypeptide exit tunnel. This chain is Large ribosomal subunit protein uL4, found in Thermoplasma volcanium (strain ATCC 51530 / DSM 4299 / JCM 9571 / NBRC 15438 / GSS1).